The chain runs to 496 residues: MTYLLALDQGTSSSRSIVFNAQGQVVAQAQQELTQIYPQPGWVEHDPLEIWRTQLATAREVLAKAGIEAREVRALGITNQRETTVVWSRKTGAPIHNAIVWQDRRAEPTCVELRARGLTPTVQAKTGLLVDAYFSGTKLKWILDHVPGARQQAENGELAFGTVDSWLIWQLTHGTVHATDVSNASRTMLFNVHSNQWDDELLRALDIPAKLLPAIKPSSALFGEVSPDLLGAAIPIGGVAGDQQSALFGQACFKPGMVKNTYGTGCFMLMHTGHSFQSSANGLITTSAAQTTAQPEFAMEGSVFVGGAVVQWLRDGLRAIPSSSEVQALAESVPDAGGVMVVPAFTGLGAPYWKPDARGTITGLSRGSTLAHIARAALESIAFQSAALLQAMSRDAVQAGGSAVAELRVDGGACVNDLLMQFQADLLGIAVVRPAVIETTALGAAYLAGLATGVYRSTDEISTLWQAERRFLPALAPARAAELMEHWEHAVRQTVL.

Threonine 11 serves as a coordination point for ADP. 3 residues coordinate ATP: threonine 11, serine 12, and serine 13. Sn-glycerol 3-phosphate is bound at residue threonine 11. An ADP-binding site is contributed by arginine 15. Residues arginine 81, glutamate 82, tyrosine 133, and aspartate 242 each contribute to the sn-glycerol 3-phosphate site. The glycerol site is built by arginine 81, glutamate 82, tyrosine 133, aspartate 242, and glutamine 243. ADP contacts are provided by threonine 264 and glycine 307. Residues threonine 264, glycine 307, glutamine 311, and glycine 412 each coordinate ATP. The ADP site is built by glycine 412 and asparagine 416.

The protein belongs to the FGGY kinase family.

The enzyme catalyses glycerol + ATP = sn-glycerol 3-phosphate + ADP + H(+). It participates in polyol metabolism; glycerol degradation via glycerol kinase pathway; sn-glycerol 3-phosphate from glycerol: step 1/1. With respect to regulation, inhibited by fructose 1,6-bisphosphate (FBP). In terms of biological role, key enzyme in the regulation of glycerol uptake and metabolism. Catalyzes the phosphorylation of glycerol to yield sn-glycerol 3-phosphate. This is Glycerol kinase from Albidiferax ferrireducens (strain ATCC BAA-621 / DSM 15236 / T118) (Rhodoferax ferrireducens).